The sequence spans 175 residues: UPF0398 protein SSA_1858 (175 aa).

It belongs to the UPF0398 family.

In Streptococcus sanguinis (strain SK36), this protein is UPF0398 protein SSA_1858.